A 125-amino-acid chain; its full sequence is Small ribosomal subunit protein uS12 (125 aa).

3-methylthioaspartic acid is present on aspartate 89.

This sequence belongs to the universal ribosomal protein uS12 family. In terms of assembly, part of the 30S ribosomal subunit. Contacts proteins S8 and S17. May interact with IF1 in the 30S initiation complex.

Functionally, with S4 and S5 plays an important role in translational accuracy. Interacts with and stabilizes bases of the 16S rRNA that are involved in tRNA selection in the A site and with the mRNA backbone. Located at the interface of the 30S and 50S subunits, it traverses the body of the 30S subunit contacting proteins on the other side and probably holding the rRNA structure together. The combined cluster of proteins S8, S12 and S17 appears to hold together the shoulder and platform of the 30S subunit. This chain is Small ribosomal subunit protein uS12, found in Clostridium acetobutylicum (strain ATCC 824 / DSM 792 / JCM 1419 / IAM 19013 / LMG 5710 / NBRC 13948 / NRRL B-527 / VKM B-1787 / 2291 / W).